The following is a 258-amino-acid chain: Granzyme A (258 aa).

Residues 1–26 (MNIPFPFSFPPAICLLLIPGVFPVSC) form the signal peptide. Positions 27 to 28 (EG) are cleaved as a propeptide — activation peptide. One can recognise a Peptidase S1 domain in the interval 29 to 255 (IIGGNEVAPH…HLNWIKKTIA (227 aa)). Cysteines 52 and 68 form a disulfide. Residues histidine 67 and aspartate 112 each act as charge relay system in the active site. Cystine bridges form between cysteine 146-cysteine 217, cysteine 178-cysteine 196, and cysteine 207-cysteine 230. The N-linked (GlcNAc...) asparagine glycan is linked to asparagine 169. The active-site Charge relay system is the serine 211.

Belongs to the peptidase S1 family. Granzyme subfamily. As to quaternary structure, homodimer; disulfide-linked. Interacts with APEX1.

It localises to the secreted. The protein resides in the cytoplasmic granule. The catalysed reaction is Hydrolysis of proteins, including fibronectin, type IV collagen and nucleolin. Preferential cleavage: -Arg-|-Xaa-, -Lys-|-Xaa- &gt;&gt; -Phe-|-Xaa- in small molecule substrates.. In terms of biological role, abundant protease in the cytosolic granules of cytotoxic T-cells and NK-cells which activates caspase-independent pyroptosis when delivered into the target cell through the immunological synapse. It cleaves after Lys or Arg. Cleaves APEX1 after 'Lys-31' and destroys its oxidative repair activity. Cleaves the nucleosome assembly protein SET after 'Lys-189', which disrupts its nucleosome assembly activity and allows the SET complex to translocate into the nucleus to nick and degrade the DNA. This is Granzyme A (GZMA) from Bos taurus (Bovine).